The primary structure comprises 385 residues: 1-deoxy-D-xylulose 5-phosphate reductoisomerase (385 aa).

Residues threonine 10, glycine 11, serine 12, isoleucine 13, and asparagine 124 each contribute to the NADPH site. Lysine 125 contributes to the 1-deoxy-D-xylulose 5-phosphate binding site. Glutamate 126 is an NADPH binding site. Aspartate 150 is a binding site for Mn(2+). 1-deoxy-D-xylulose 5-phosphate-binding residues include serine 151, glutamate 152, serine 176, and histidine 199. Glutamate 152 is a binding site for Mn(2+). NADPH is bound at residue glycine 205. Residues serine 212, asparagine 217, lysine 218, and glutamate 221 each coordinate 1-deoxy-D-xylulose 5-phosphate. Glutamate 221 is a Mn(2+) binding site.

Belongs to the DXR family. Mg(2+) is required as a cofactor. Requires Mn(2+) as cofactor.

It carries out the reaction 2-C-methyl-D-erythritol 4-phosphate + NADP(+) = 1-deoxy-D-xylulose 5-phosphate + NADPH + H(+). It participates in isoprenoid biosynthesis; isopentenyl diphosphate biosynthesis via DXP pathway; isopentenyl diphosphate from 1-deoxy-D-xylulose 5-phosphate: step 1/6. Functionally, catalyzes the NADPH-dependent rearrangement and reduction of 1-deoxy-D-xylulose-5-phosphate (DXP) to 2-C-methyl-D-erythritol 4-phosphate (MEP). This is 1-deoxy-D-xylulose 5-phosphate reductoisomerase from Clostridium kluyveri (strain NBRC 12016).